A 346-amino-acid chain; its full sequence is G-protein coupled receptor homolog U12 (346 aa).

Residues 1–31 lie on the Extracellular side of the membrane; that stretch reads MICYSFAKNVTFAFLIILQNFFSQHDEEYKY. A helical transmembrane segment spans residues 32–56; that stretch reads NYTCITPTVRKAQRLESVINGIMLT. Over 57-83 the chain is Cytoplasmic; it reads LILPVSTVVICTLLIYYKWTKQTITSP. The helical transmembrane segment at 84–108 threads the bilayer; sequence YLITLFISDSLHSLTVLLLTLNREA. Residues 109–115 lie on the Extracellular side of the membrane; the sequence is LTNLNQA. Residues 116-142 traverse the membrane as a helical segment; sequence LCQCVLFVYSASCTYSLCMLAVISTIR. The Cytoplasmic portion of the chain corresponds to 143 to 159; it reads YRTLQRRTLNDKNNNHI. Residues 160–181 form a helical membrane-spanning segment; the sequence is KRNVGILFLSSAMCAIPAVLYV. Residues 182 to 208 are Extracellular-facing; that stretch reads QVEKKKGNYGKCNIHISTQKAYDLFIG. A helical transmembrane segment spans residues 209–229; sequence IKIVYCFLWGIFPTVIFSYFY. Residues 230-245 are Cytoplasmic-facing; that stretch reads VIFGKTLRALTQSKHN. A helical transmembrane segment spans residues 246–272; that stretch reads KTLSFISLLILSFLCIQIPNLLVMSVE. Topologically, residues 273 to 286 are extracellular; it reads IFFLYIANTSCLGT. The chain crosses the membrane as a helical span at residues 287–310; sequence IQREIVQIISRLMPEIHCLSNPLV. The Cytoplasmic portion of the chain corresponds to 311–346; the sequence is YAFTRTDFRLRFYDFIKCNLCNSSLKRKRNPLTIKN.

Belongs to the G-protein coupled receptor 1 family.

Its subcellular location is the host cell membrane. The sequence is that of G-protein coupled receptor homolog U12 (U12) from Homo sapiens (Human).